A 493-amino-acid chain; its full sequence is 3-octaprenyl-4-hydroxybenzoate carboxy-lyase (493 aa).

N175 lines the Mn(2+) pocket. Residues 178 to 180 (IYR), 192 to 194 (RWL), and 197 to 198 (RG) contribute to the prenylated FMN site. Position 241 (E241) interacts with Mn(2+). D290 (proton donor) is an active-site residue.

It belongs to the UbiD family. Homohexamer. Prenylated FMN serves as cofactor. The cofactor is Mn(2+).

It localises to the cell membrane. The enzyme catalyses a 4-hydroxy-3-(all-trans-polyprenyl)benzoate + H(+) = a 2-(all-trans-polyprenyl)phenol + CO2. It functions in the pathway cofactor biosynthesis; ubiquinone biosynthesis. In terms of biological role, catalyzes the decarboxylation of 3-octaprenyl-4-hydroxy benzoate to 2-octaprenylphenol, an intermediate step in ubiquinone biosynthesis. In Photorhabdus laumondii subsp. laumondii (strain DSM 15139 / CIP 105565 / TT01) (Photorhabdus luminescens subsp. laumondii), this protein is 3-octaprenyl-4-hydroxybenzoate carboxy-lyase.